A 415-amino-acid chain; its full sequence is L-cysteine:1D-myo-inositol 2-amino-2-deoxy-alpha-D-glucopyranoside ligase (415 aa).

C43 serves as a coordination point for Zn(2+). L-cysteinyl-5'-AMP-binding positions include 43 to 46 (CGIT), T58, and 81 to 83 (NVT). Residues 45–55 (ITPYDATHLGH) carry the 'HIGH' region motif. The 'ERGGDP' region motif lies at 187-192 (ERGGDP). Residue W227 coordinates L-cysteinyl-5'-AMP. C231 contacts Zn(2+). 249–251 (GSD) serves as a coordination point for L-cysteinyl-5'-AMP. A Zn(2+)-binding site is contributed by H256. I283 provides a ligand contact to L-cysteinyl-5'-AMP. Residues 289–293 (KMSKS) carry the 'KMSKS' region motif.

The protein belongs to the class-I aminoacyl-tRNA synthetase family. MshC subfamily. In terms of assembly, monomer. It depends on Zn(2+) as a cofactor.

It catalyses the reaction 1D-myo-inositol 2-amino-2-deoxy-alpha-D-glucopyranoside + L-cysteine + ATP = 1D-myo-inositol 2-(L-cysteinylamino)-2-deoxy-alpha-D-glucopyranoside + AMP + diphosphate + H(+). Catalyzes the ATP-dependent condensation of GlcN-Ins and L-cysteine to form L-Cys-GlcN-Ins. The polypeptide is L-cysteine:1D-myo-inositol 2-amino-2-deoxy-alpha-D-glucopyranoside ligase (Saccharomonospora viridis (strain ATCC 15386 / DSM 43017 / JCM 3036 / CCUG 5913 / NBRC 12207 / NCIMB 9602 / P101) (Thermoactinomyces viridis)).